Here is a 294-residue protein sequence, read N- to C-terminus: Glyceraldehyde-3-phosphate dehydrogenase (294 aa).

NAD(+)-binding residues include Asp-19, Lys-63, and Thr-105. Residues 134-136, Thr-165, 194-195, and Arg-217 each bind D-glyceraldehyde 3-phosphate; these read SCT and TG. Cys-135 acts as the Nucleophile in catalysis.

This sequence belongs to the glyceraldehyde-3-phosphate dehydrogenase family. As to quaternary structure, homotetramer.

The protein resides in the cytoplasm. It carries out the reaction D-glyceraldehyde 3-phosphate + phosphate + NAD(+) = (2R)-3-phospho-glyceroyl phosphate + NADH + H(+). Its pathway is carbohydrate degradation; glycolysis; pyruvate from D-glyceraldehyde 3-phosphate: step 1/5. Its function is as follows. Catalyzes the oxidative phosphorylation of glyceraldehyde 3-phosphate (G3P) to 1,3-bisphosphoglycerate (BPG) using the cofactor NAD. The first reaction step involves the formation of a hemiacetal intermediate between G3P and a cysteine residue, and this hemiacetal intermediate is then oxidized to a thioester, with concomitant reduction of NAD to NADH. The reduced NADH is then exchanged with the second NAD, and the thioester is attacked by a nucleophilic inorganic phosphate to produce BPG. This is Glyceraldehyde-3-phosphate dehydrogenase (gap) from Serratia odorifera.